Consider the following 156-residue polypeptide: Small ribosomal subunit protein uS7 (156 aa).

It belongs to the universal ribosomal protein uS7 family. Part of the 30S ribosomal subunit. Contacts proteins S9 and S11.

Its function is as follows. One of the primary rRNA binding proteins, it binds directly to 16S rRNA where it nucleates assembly of the head domain of the 30S subunit. Is located at the subunit interface close to the decoding center, probably blocks exit of the E-site tRNA. The protein is Small ribosomal subunit protein uS7 of Lactobacillus helveticus (strain DPC 4571).